The sequence spans 551 residues: CTP synthase (551 aa).

An amidoligase domain region spans residues 1–265 (MTRYLFITGG…DHIVAEKWGL (265 aa)). Residue S13 participates in CTP binding. UTP is bound at residue S13. ATP contacts are provided by residues 14–19 (SLGKGI) and D71. The Mg(2+) site is built by D71 and E139. CTP contacts are provided by residues 146–148 (DIE), 186–191 (KTKPTQ), and K222. UTP is bound by residues 186–191 (KTKPTQ) and K222. The Glutamine amidotransferase type-1 domain occupies 290 to 541 (TVAMVGKYVD…LRAAIAHRDG (252 aa)). G351 lines the L-glutamine pocket. The active-site Nucleophile; for glutamine hydrolysis is the C378. Residues 379-382 (LGMQ), E402, and R469 contribute to the L-glutamine site. Residues H514 and E516 contribute to the active site.

Belongs to the CTP synthase family. In terms of assembly, homotetramer.

It carries out the reaction UTP + L-glutamine + ATP + H2O = CTP + L-glutamate + ADP + phosphate + 2 H(+). It catalyses the reaction L-glutamine + H2O = L-glutamate + NH4(+). The enzyme catalyses UTP + NH4(+) + ATP = CTP + ADP + phosphate + 2 H(+). It functions in the pathway pyrimidine metabolism; CTP biosynthesis via de novo pathway; CTP from UDP: step 2/2. Its activity is regulated as follows. Allosterically activated by GTP, when glutamine is the substrate; GTP has no effect on the reaction when ammonia is the substrate. The allosteric effector GTP functions by stabilizing the protein conformation that binds the tetrahedral intermediate(s) formed during glutamine hydrolysis. Inhibited by the product CTP, via allosteric rather than competitive inhibition. In terms of biological role, catalyzes the ATP-dependent amination of UTP to CTP with either L-glutamine or ammonia as the source of nitrogen. Regulates intracellular CTP levels through interactions with the four ribonucleotide triphosphates. This chain is CTP synthase, found in Halorhodospira halophila (strain DSM 244 / SL1) (Ectothiorhodospira halophila (strain DSM 244 / SL1)).